Reading from the N-terminus, the 94-residue chain is MEKQTENTRPECPKAFYFVSIPGDFGQTPFASSLMYGSTALAAVYQVKGAIRVVSEHFDLRFADNGFTPAGVTQAEWLGKLITETFGFRLELFL.

In terms of biological role, binds to single-stranded DNA (ssDNA). The chain is Protein P19 (XIX) from Acinetobacter calcoaceticus (Arthrobacter siderocapsulatus).